The chain runs to 367 residues: tRNA-specific 2-thiouridylase MnmA (367 aa).

ATP-binding positions include 12-19 and methionine 38; that span reads GMSGGVDS. Residues 98-100 form an interaction with target base in tRNA region; the sequence is NPD. The Nucleophile role is filled by cysteine 103. Residues cysteine 103 and cysteine 200 are joined by a disulfide bond. Glycine 128 is a binding site for ATP. The tract at residues 150 to 152 is interaction with tRNA; sequence KDQ. The Cysteine persulfide intermediate role is filled by cysteine 200. The interaction with tRNA stretch occupies residues 312 to 313; the sequence is RY.

Belongs to the MnmA/TRMU family. As to quaternary structure, interacts with TusE.

Its subcellular location is the cytoplasm. The catalysed reaction is S-sulfanyl-L-cysteinyl-[protein] + uridine(34) in tRNA + AH2 + ATP = 2-thiouridine(34) in tRNA + L-cysteinyl-[protein] + A + AMP + diphosphate + H(+). In terms of biological role, catalyzes the 2-thiolation of uridine at the wobble position (U34) of tRNA(Lys), tRNA(Glu) and tRNA(Gln), leading to the formation of s(2)U34, the first step of tRNA-mnm(5)s(2)U34 synthesis. Sulfur is provided by IscS, via a sulfur-relay system. Binds ATP and its substrate tRNAs. The sequence is that of tRNA-specific 2-thiouridylase MnmA from Proteus mirabilis (strain HI4320).